The chain runs to 439 residues: MIKIPKIGFVSLGCPKNLVDSERIITKLKAEGYDLVDSYDNADMVIVNTCGFLNSAIDESLEVIGEAIAENGKVLVTGCLGNKADLIKEKHPEVLSITGPQDYENLIEAVHTHAPIFANDFVSLVPPQGIKLTPRHYSYLKISEGCNNTCTFCIIPDIRGKLKSRSIDNIMKEAEKLKNAGVKELLVISQDTSAYGVDIKYKSGIWNNKEYQSNIIDLATALGDLDMWTRLHYVYPYPHVDKIVPLMAQGKILPYLDVPLQHSSPEVLKRMKRPAHTQKTLDRINKWRDICPDITIRSTFIVGFPGETEADFEHLLDFAEKAQLDRVGCFKYSEVEGAKANQFDNLISEEVKQQRLDEFMGLQAQISTDKLQRFVGTEQQVIIDAINKDENYAIGRTKYDAPEVDGQVIIGDALERNLKVGEFATVEITESTEYDLIAD.

Residues Pro5–Pro115 enclose the MTTase N-terminal domain. Cys14, Cys50, Cys79, Cys146, Cys150, and Cys153 together coordinate [4Fe-4S] cluster. Residues Leu132 to Asp369 enclose the Radical SAM core domain. The TRAM domain maps to Gln372 to Asp439.

The protein belongs to the methylthiotransferase family. RimO subfamily. Requires [4Fe-4S] cluster as cofactor.

Its subcellular location is the cytoplasm. The catalysed reaction is L-aspartate(89)-[ribosomal protein uS12]-hydrogen + (sulfur carrier)-SH + AH2 + 2 S-adenosyl-L-methionine = 3-methylsulfanyl-L-aspartate(89)-[ribosomal protein uS12]-hydrogen + (sulfur carrier)-H + 5'-deoxyadenosine + L-methionine + A + S-adenosyl-L-homocysteine + 2 H(+). Catalyzes the methylthiolation of an aspartic acid residue of ribosomal protein uS12. The protein is Ribosomal protein uS12 methylthiotransferase RimO of Francisella tularensis subsp. novicida (strain U112).